The following is a 320-amino-acid chain: MNITALTDNTQGAAGLELYEVYNNGYPTAYGNIIHLKGMTAVGEGELLIGWSGTSGAHAPAFIRSRRDTTDANWSPWAQLYTSAHPPAEFYPVGAPIPWPSDTVPSGYALMQGQTFDKSAYPKLAVAYPSGVIPDMRGWTIKGKPASGRAVLSQEQDGIKSHTHSASASSTDLGTETTSSFDYGTKSTNNTGAHTHSISGTANSAGAHQHKSSGAFGGTNTSIFPNGYTAISNLSAGIMSTTSGSGQTRNAGKTSSDGAHTHSLSGTAASAGAHAHTVGIGAHTHSVAIGSHGHTITVNAAGNAENTVKNIAFNYIVRLA.

2 disordered regions span residues 147-213 (SGRA…HKSS) and 241-270 (TTSG…TAAS). Polar residues-rich tracts occupy residues 172-206 (DLGT…NSAG) and 241-258 (TTSG…SSDG). The span at 261 to 270 (THSLSGTAAS) shows a compositional bias: low complexity.

It belongs to the tail fiber family.

This is Prophage side tail fiber protein homolog StfQ (stfQ) from Escherichia coli (strain K12).